The following is a 387-amino-acid chain: 3-hydroxy-D-aspartate aldolase (387 aa).

At K62 the chain carries N6-(pyridoxal phosphate)lysine. Q85 contacts pyridoxal 5'-phosphate. The tract at residues 199-228 is disordered; that stretch reads HGQLRGPQGQAGRRHCPGERGRGRAGGRGL. Pyridoxal 5'-phosphate contacts are provided by residues T238, 256–257, and Y265; that span reads GS. Residues H355 and D357 each contribute to the Mg(2+) site.

It belongs to the DSD1 family. As to quaternary structure, homodimer. It depends on pyridoxal 5'-phosphate as a cofactor. Mn(2+) serves as cofactor. Requires Mg(2+) as cofactor. Co(2+) is required as a cofactor.

The enzyme catalyses (3S)-3-hydroxy-D-aspartate = glyoxylate + glycine. It carries out the reaction (3R)-3-hydroxy-D-aspartate = glyoxylate + glycine. Catalyzes the condensation of glyoxylate and glycine into (2R,3S)-beta-hydroxyaspartate ((3S)-3-hydroxy-D-aspartate). Functions in glyoxylate assimilation via the beta-hydroxyaspartate cycle (BHAC). In vitro catalyzes the cleavage of both D-erythro- and D-threo-3-hydroxyaspartate to glycine and glyoxylate. Also acts on D-threonine, D-3-phenylserine and D-3-3,4-methylenedioxyphenylserine. The protein is 3-hydroxy-D-aspartate aldolase (dhaa) of Paracoccus denitrificans.